The sequence spans 319 residues: Acetyl esterase (319 aa).

An Involved in the stabilization of the negatively charged intermediate by the formation of the oxyanion hole motif is present at residues 91–93; that stretch reads HGG. Active-site residues include Ser-165, Asp-262, and His-292.

Belongs to the 'GDXG' lipolytic enzyme family. Homodimer. Interacts with MalT and MelA.

The protein localises to the cytoplasm. Displays esterase activity towards short chain fatty esters (acyl chain length of up to 8 carbons). Able to hydrolyze triacetylglycerol (triacetin) and tributyrylglycerol (tributyrin), but not trioleylglycerol (triolein) or cholesterol oleate. Negatively regulates MalT activity by antagonizing maltotriose binding. Inhibits MelA galactosidase activity. This is Acetyl esterase from Escherichia coli (strain 55989 / EAEC).